Reading from the N-terminus, the 377-residue chain is Tryptophan--tRNA ligase, mitochondrial (377 aa).

ATP contacts are provided by residues Gln-21 and 28 to 31 (HLGN). Positions 22-31 (PTSSALHLGN) match the 'HIGH' region motif. L-tryptophan is bound at residue Asp-181. ATP-binding positions include 193-195 (GED), 242-246 (KMSKS), and Lys-245. The 'KMSKS' region signature appears at 242–246 (KMSKS).

This sequence belongs to the class-I aminoacyl-tRNA synthetase family.

It is found in the mitochondrion matrix. The enzyme catalyses tRNA(Trp) + L-tryptophan + ATP = L-tryptophyl-tRNA(Trp) + AMP + diphosphate + H(+). The polypeptide is Tryptophan--tRNA ligase, mitochondrial (wars2) (Dictyostelium discoideum (Social amoeba)).